The primary structure comprises 228 residues: Aquaporin Z (228 aa).

Helical transmembrane passes span methionine 1 to glycine 21 and alanine 23 to phenylalanine 43. An NPA 1 motif is present at residues asparagine 63–alanine 65. Helical transmembrane passes span isoleucine 82–isoleucine 102, methionine 129–glycine 149, and leucine 154–valine 174. An NPA 2 motif is present at residues asparagine 184–alanine 186. Residues leucine 205–leucine 225 traverse the membrane as a helical segment.

Belongs to the MIP/aquaporin (TC 1.A.8) family. As to quaternary structure, homotetramer.

The protein resides in the cell inner membrane. It carries out the reaction H2O(in) = H2O(out). In terms of biological role, channel that permits osmotically driven movement of water in both directions. It is involved in the osmoregulation and in the maintenance of cell turgor during volume expansion in rapidly growing cells. It mediates rapid entry or exit of water in response to abrupt changes in osmolarity. This chain is Aquaporin Z, found in Brucella melitensis biotype 1 (strain ATCC 23456 / CCUG 17765 / NCTC 10094 / 16M).